The chain runs to 349 residues: 5-deoxyribose 1-phosphate isomerase (349 aa).

Substrate contacts are provided by residues 49-51, arginine 92, and glutamine 199; that span reads RGA. The Proton donor role is filled by aspartate 240. A substrate-binding site is contributed by 250-251; that stretch reads NK.

This sequence belongs to the EIF-2B alpha/beta/delta subunits family. DrdI subfamily.

It carries out the reaction 5-deoxy-alpha-D-ribose 1-phosphate = 5-deoxy-D-ribulose 1-phosphate. Its pathway is carbohydrate degradation. In terms of biological role, catalyzes the isomerization of 5-deoxy-alpha-D-ribose 1-phosphate to 5-deoxy-D-ribulose 1-phosphate, as part of a 5-deoxyribose salvage pathway that recycles this toxic radical SAM enzyme by-product to mainstream metabolites. The polypeptide is 5-deoxyribose 1-phosphate isomerase (Clostridium botulinum (strain Kyoto / Type A2)).